The primary structure comprises 297 residues: Pyrroline-5-carboxylate reductase 1 (297 aa).

Belongs to the pyrroline-5-carboxylate reductase family.

The protein resides in the cytoplasm. It carries out the reaction L-proline + NADP(+) = (S)-1-pyrroline-5-carboxylate + NADPH + 2 H(+). The catalysed reaction is L-proline + NAD(+) = (S)-1-pyrroline-5-carboxylate + NADH + 2 H(+). It participates in amino-acid biosynthesis; L-proline biosynthesis; L-proline from L-glutamate 5-semialdehyde: step 1/1. In terms of biological role, catalyzes the reduction of 1-pyrroline-5-carboxylate (PCA) to L-proline. The protein is Pyrroline-5-carboxylate reductase 1 (proH) of Bacillus spizizenii (strain ATCC 23059 / NRRL B-14472 / W23) (Bacillus subtilis subsp. spizizenii).